The primary structure comprises 20 residues: Cytochrome P450-RR1 (20 aa).

This sequence belongs to the cytochrome P450 family. Requires heme as cofactor.

Its function is as follows. P450-RRI catalyzes the O-dealkylation of 2-ethoxyphenol and 2-methoxyphenol to produce catechol. The cytochrome binds other ortho-substituted phenols, including 2-ethoxyphenol, 2-methylphenol and 2-chlorophenol. This is Cytochrome P450-RR1 from Rhodococcus rhodochrous.